A 225-amino-acid chain; its full sequence is Leucyl/phenylalanyl-tRNA--protein transferase (225 aa).

It belongs to the L/F-transferase family.

It is found in the cytoplasm. It catalyses the reaction N-terminal L-lysyl-[protein] + L-leucyl-tRNA(Leu) = N-terminal L-leucyl-L-lysyl-[protein] + tRNA(Leu) + H(+). The enzyme catalyses N-terminal L-arginyl-[protein] + L-leucyl-tRNA(Leu) = N-terminal L-leucyl-L-arginyl-[protein] + tRNA(Leu) + H(+). The catalysed reaction is L-phenylalanyl-tRNA(Phe) + an N-terminal L-alpha-aminoacyl-[protein] = an N-terminal L-phenylalanyl-L-alpha-aminoacyl-[protein] + tRNA(Phe). Functions in the N-end rule pathway of protein degradation where it conjugates Leu, Phe and, less efficiently, Met from aminoacyl-tRNAs to the N-termini of proteins containing an N-terminal arginine or lysine. The chain is Leucyl/phenylalanyl-tRNA--protein transferase from Rhodopseudomonas palustris (strain TIE-1).